Reading from the N-terminus, the 550-residue chain is Cytochrome P450 monooxygenase hasH (550 aa).

The helical transmembrane segment at 39 to 59 (IGVLASIVVLVTVVIGPKAVI) threads the bilayer. Cysteine 493 is a binding site for heme.

The protein belongs to the cytochrome P450 family. Requires heme as cofactor.

Its subcellular location is the membrane. The protein operates within secondary metabolite biosynthesis. Cytochrome P450 monooxygenase; part of the gene cluster that mediates the biosynthesis of hexadehydro-astechrome (HAS), a tryptophan-derived iron(III)-complex that acts as a virulence factor in infected mice. Within the pathway, hasH, with the O-methyltransferase hasC and the FAD-linked oxidoreductase hasG, convert the hasE-prenylated Trp-Ala dipeptide into an O-methylated diketopiperazine that is then released from the hasD NRPS. The HAS biosynthesis begins with the synthesis of a tethered Trp-Ala dipeptide by the NRPS hasD. The 7-dimethylallyltryptophan synthase hasE then catalyzes the prenylation of the hasD-tethered tryptophan or the resulting tethered Trp-Ala dipeptide at the C-7 position of the indole moiety. HAS biosynthesis continues via tethered intermediates with the succesive action of the cytochrome P450 monooxygenase hasH, the O-methyltransferase hasC, and the FAD-linked oxidoreductase hasG. The resulting O-methylated diketopiperazine is then released from hasD. Finally, three O-methylated diketopiperazine molecules assemble in a trimeric complex with Fe(III) to produce hexadehydro-astechrome. The protein is Cytochrome P450 monooxygenase hasH of Aspergillus fumigatus (strain CBS 144.89 / FGSC A1163 / CEA10) (Neosartorya fumigata).